A 313-amino-acid polypeptide reads, in one-letter code: Cytosolic Fe-S cluster assembly factor NUBP1 homolog (313 aa).

The disordered stretch occupies residues 1-25 (MSDVPEDANAGCPGTGSAGAGKASG). [4Fe-4S] cluster contacts are provided by cysteine 12, cysteine 26, cysteine 29, and cysteine 35. 66 to 73 (GKGGVGKS) contacts ATP. 2 residues coordinate [4Fe-4S] cluster: cysteine 240 and cysteine 243.

Belongs to the Mrp/NBP35 ATP-binding proteins family. NUBP1/NBP35 subfamily. As to quaternary structure, heterotetramer of 2 NUBP1 and 2 NUBP2 chains. Requires [4Fe-4S] cluster as cofactor.

It localises to the cytoplasm. It is found in the cell projection. Its function is as follows. Component of the cytosolic iron-sulfur (Fe/S) protein assembly (CIA) machinery. Required for maturation of extramitochondrial Fe-S proteins. The NUBP1-NUBP2 heterotetramer forms a Fe-S scaffold complex, mediating the de novo assembly of an Fe-S cluster and its transfer to target apoproteins. Regulates cilium formation and structure. The chain is Cytosolic Fe-S cluster assembly factor NUBP1 homolog from Caenorhabditis briggsae.